The following is a 64-amino-acid chain: Large ribosomal subunit protein bL28 (64 aa).

It belongs to the bacterial ribosomal protein bL28 family.

This Trichlorobacter lovleyi (strain ATCC BAA-1151 / DSM 17278 / SZ) (Geobacter lovleyi) protein is Large ribosomal subunit protein bL28.